The following is a 146-amino-acid chain: MSSERTFLPNGNYKIKSLFSDSLYLTYSSGSLSFLNTSSLDNQKWKLEYISSSNGFRFSNVAEPNKYLAYNDYGFIYLSSSSNNSLWNPIKIAINSYIICTLSIVNVTDYAWTIYDNNNNITDQPILNLPNFDINNSNQILKLEKL.

In terms of assembly, botulinum toxins are produced as large progenitor toxins of 12S (M toxin, about 280 kDa) and 16S (L toxin, about 650 kDa). M toxin consists of a non-toxic, non-hemagglutinin component (NTNHA) and the neurotoxin (BoNT/D). L toxin consists of the M toxin and the 3 hemagglutinin (HA) subcomponents of 70, 33, and 17 kDa. The stoichiometry of the whole complex has been modeled as one BoNT/D, one NTNHA, three HA-70, six HA-33 and three HA-17. HA-33 and HA-17 crystallize as a heterotrimer with two HA-33 and one HA-17.

The protein resides in the secreted. Functionally, the hemagglutinin (HA) component of the progenitor toxin protects the structural integrity of the neurotoxin; may increase internalization of the neurotoxin into the bloodstream of the host. Involved in binding to the small intestine through interactions with glycolipids and glycoproteins containing sialic acid moieties. The hemagglutinin complex composed of HA-70, HA-33 and HA-17 agglutinates erythrocytes, whereas the individual compenents do not. Erythrocyte agglutination also occurs with the entire toxin complex. The polypeptide is Hemagglutinin component HA-17 type D (Clostridium botulinum D phage (Clostridium botulinum D bacteriophage)).